The chain runs to 545 residues: CTP synthase (545 aa).

The tract at residues 1 to 265 (MTKYIFITGG…DEIVVKKLSL (265 aa)) is amidoligase domain. CTP is bound at residue serine 13. Serine 13 serves as a coordination point for UTP. Residues 14 to 19 (SLGKGI) and aspartate 71 contribute to the ATP site. Residues aspartate 71 and glutamate 139 each coordinate Mg(2+). CTP-binding positions include 146–148 (DIE), 186–191 (KTKPTQ), and lysine 222. UTP is bound by residues 186-191 (KTKPTQ) and lysine 222. The region spanning 290–541 (KIAMVGKYTE…VFAARIHHQE (252 aa)) is the Glutamine amidotransferase type-1 domain. Glycine 351 is an L-glutamine binding site. The Nucleophile; for glutamine hydrolysis role is filled by cysteine 378. L-glutamine is bound by residues 379 to 382 (LGMQ), glutamate 402, and arginine 469. Catalysis depends on residues histidine 514 and glutamate 516.

This sequence belongs to the CTP synthase family. Homotetramer.

The enzyme catalyses UTP + L-glutamine + ATP + H2O = CTP + L-glutamate + ADP + phosphate + 2 H(+). The catalysed reaction is L-glutamine + H2O = L-glutamate + NH4(+). It carries out the reaction UTP + NH4(+) + ATP = CTP + ADP + phosphate + 2 H(+). Its pathway is pyrimidine metabolism; CTP biosynthesis via de novo pathway; CTP from UDP: step 2/2. With respect to regulation, allosterically activated by GTP, when glutamine is the substrate; GTP has no effect on the reaction when ammonia is the substrate. The allosteric effector GTP functions by stabilizing the protein conformation that binds the tetrahedral intermediate(s) formed during glutamine hydrolysis. Inhibited by the product CTP, via allosteric rather than competitive inhibition. In terms of biological role, catalyzes the ATP-dependent amination of UTP to CTP with either L-glutamine or ammonia as the source of nitrogen. Regulates intracellular CTP levels through interactions with the four ribonucleotide triphosphates. The sequence is that of CTP synthase from Legionella pneumophila (strain Lens).